Here is a 398-residue protein sequence, read N- to C-terminus: 1-deoxy-D-xylulose 5-phosphate reductoisomerase (398 aa).

Threonine 11, glycine 12, serine 13, isoleucine 14, arginine 38, asparagine 39, and asparagine 125 together coordinate NADPH. Position 126 (lysine 126) interacts with 1-deoxy-D-xylulose 5-phosphate. Glutamate 127 contacts NADPH. Aspartate 151 contributes to the Mn(2+) binding site. 1-deoxy-D-xylulose 5-phosphate contacts are provided by serine 152, glutamate 153, serine 179, and histidine 202. Glutamate 153 serves as a coordination point for Mn(2+). Glycine 208 is a binding site for NADPH. Residues serine 215, asparagine 220, lysine 221, and glutamate 224 each coordinate 1-deoxy-D-xylulose 5-phosphate. Glutamate 224 is a Mn(2+) binding site.

The protein belongs to the DXR family. It depends on Mg(2+) as a cofactor. Requires Mn(2+) as cofactor.

The enzyme catalyses 2-C-methyl-D-erythritol 4-phosphate + NADP(+) = 1-deoxy-D-xylulose 5-phosphate + NADPH + H(+). It participates in isoprenoid biosynthesis; isopentenyl diphosphate biosynthesis via DXP pathway; isopentenyl diphosphate from 1-deoxy-D-xylulose 5-phosphate: step 1/6. Catalyzes the NADPH-dependent rearrangement and reduction of 1-deoxy-D-xylulose-5-phosphate (DXP) to 2-C-methyl-D-erythritol 4-phosphate (MEP). This is 1-deoxy-D-xylulose 5-phosphate reductoisomerase from Burkholderia vietnamiensis (strain G4 / LMG 22486) (Burkholderia cepacia (strain R1808)).